We begin with the raw amino-acid sequence, 229 residues long: Cytidylate kinase (229 aa).

12-20 (GPSGAGKGT) contributes to the ATP binding site.

Belongs to the cytidylate kinase family. Type 1 subfamily.

Its subcellular location is the cytoplasm. It carries out the reaction CMP + ATP = CDP + ADP. The enzyme catalyses dCMP + ATP = dCDP + ADP. This Pseudomonas aeruginosa (strain LESB58) protein is Cytidylate kinase.